Consider the following 239-residue polypeptide: 7-cyano-7-deazaguanine synthase (239 aa).

ATP is bound at residue 7–17; sequence LSGGIDSSTLL. Residues Cys-184, Cys-192, Cys-195, and Cys-198 each coordinate Zn(2+).

Belongs to the QueC family. It depends on Zn(2+) as a cofactor.

It catalyses the reaction 7-carboxy-7-deazaguanine + NH4(+) + ATP = 7-cyano-7-deazaguanine + ADP + phosphate + H2O + H(+). It functions in the pathway purine metabolism; 7-cyano-7-deazaguanine biosynthesis. Catalyzes the ATP-dependent conversion of 7-carboxy-7-deazaguanine (CDG) to 7-cyano-7-deazaguanine (preQ(0)). The chain is 7-cyano-7-deazaguanine synthase from Archaeoglobus fulgidus (strain ATCC 49558 / DSM 4304 / JCM 9628 / NBRC 100126 / VC-16).